The following is a 653-amino-acid chain: Choline transporter-like protein 3 (653 aa).

The helical transmembrane segment at 34-54 threads the bilayer; that stretch reads WLFLFFLFWTGLVFIMGYSVV. N-linked (GlcNAc...) asparagine glycosylation is found at Asn136 and Asn151. The next 5 helical transmembrane spans lie at 213 to 233, 243 to 263, 284 to 304, 334 to 354, and 384 to 404; these read DTIL…MFTF, IFIS…WWLY, VLGF…LIFV, LWTF…LLSL, and LIGL…TIAG. Residues Asn412, Asn503, and Asn521 are each glycosylated (N-linked (GlcNAc...) asparagine). 2 consecutive transmembrane segments (helical) span residues 534-554 and 563-583; these read FIIF…GLMA and VWAV…HSFL. The segment at 632 to 653 is disordered; sequence RAQQDKHSLRNEEGTELQAIVR. A compositionally biased stretch (basic and acidic residues) spans 634-644; it reads QQDKHSLRNEE.

The protein belongs to the CTL (choline transporter-like) family.

It is found in the membrane. The sequence is that of Choline transporter-like protein 3 (SLC44A3) from Homo sapiens (Human).